A 283-amino-acid polypeptide reads, in one-letter code: Poly(3-hydroxyalkanoate) depolymerase (283 aa).

The AB hydrolase-1 domain occupies 30–253; it reads PLLIFNGIGA…IDDGHLFLIT (224 aa). The Charge relay system role is filled by S102.

This sequence belongs to the AB hydrolase superfamily. Lipase family.

In terms of biological role, complements a mutant that does not degrade PHA; might be a lipase. The protein is Poly(3-hydroxyalkanoate) depolymerase of Ectopseudomonas oleovorans (Pseudomonas oleovorans).